The sequence spans 313 residues: Ribosomal RNA small subunit methyltransferase H (313 aa).

Residues 35 to 37 (GGH), Asp55, Phe79, Asp101, and Gln108 each bind S-adenosyl-L-methionine.

The protein belongs to the methyltransferase superfamily. RsmH family.

It localises to the cytoplasm. It carries out the reaction cytidine(1402) in 16S rRNA + S-adenosyl-L-methionine = N(4)-methylcytidine(1402) in 16S rRNA + S-adenosyl-L-homocysteine + H(+). Its function is as follows. Specifically methylates the N4 position of cytidine in position 1402 (C1402) of 16S rRNA. This Salmonella newport (strain SL254) protein is Ribosomal RNA small subunit methyltransferase H.